The chain runs to 328 residues: MDAQNKEVAALIEKIAGIQAAIAELPSLSPSPEVDRLFTDLVTACVPPSPVDVTKLSPEHQRMREALIRLCSAAEGKLEAHYADLLATFDNPLDHLGLFPYYSNYVNLSRLEYELLARHVPGIAPARVAFVGSGPLPFSSLVLAAHHLPETQFDNYDLCGAANERARKLFGATADGVGARMSFHTADVADLTQELGAYDVVFLAALVGMAAEEKAKVIAHLGAHMVEGASLVVRSARPRGFLYPIVDPEDIRRGGFEVLAVHHPEGEVINSVIVARKAVEAQLSGPQNGDAHARGAVPLVSPPCNFSTKMEASALEKSEELTAKELAF.

This sequence belongs to the nicotianamine synthase (NAS)-like family. In roots but not in leaves.

It carries out the reaction 3 S-adenosyl-L-methionine = nicotianamine + 3 S-methyl-5'-thioadenosine + 3 H(+). In terms of biological role, synthesizes nicotianamine, a polyamine that is the first intermediate in the synthesis of the phytosiderophores of the mugineic acid type found in gramineae which serves as a sensor for the physiological iron status within the plant, and/or might be involved in the transport of iron. The chain is Nicotianamine synthase 1 (NAS1) from Hordeum vulgare (Barley).